The chain runs to 140 residues: Non-specific lipid transfer protein GPI-anchored 33 (140 aa).

Residues 1–27 form the signal peptide; the sequence is MAYTNKVTISAAVATMMLFLAVTIVDA. 4 disulfides stabilise this stretch: cysteine 40-cysteine 80, cysteine 52-cysteine 64, cysteine 65-cysteine 104, and cysteine 78-cysteine 112. N-linked (GlcNAc...) asparagine glycosylation is present at asparagine 91. The GPI-anchor amidated glycine moiety is linked to residue glycine 115. A propeptide spans 116–140 (removed in mature form); sequence DASGGSTNKIAASMVLLGLVASLFF.

This sequence belongs to the plant LTP family.

The protein localises to the cell membrane. Functionally, probable lipid transfer protein. This is Non-specific lipid transfer protein GPI-anchored 33 from Arabidopsis thaliana (Mouse-ear cress).